The chain runs to 470 residues: MNPNQKIITIGSASIVLTTIGLLLQITSLCSIWFSHYNQVTQPHEQACSNNTTNYYNETFVNVTNVQNNYTTIIEPSAPNVVHYSSGRDLCPVKGWAPLSKDNGIRIGSRGEVFVIREPFISCSISECRTFFLTQGALLNDKHSNGTVKDRSPFRTLMSCPMGVAPSPSNSRFESVAWSATACSDGPGWLTLGITGPDATAVAVLKYNGIITDTLKSWKGNIMRTQESECVCQDEFCYTLITDGPSNAQAFYKILKIRKGKIVSVKDVNATGFHFEECSCYPSGTDVECVCRDNWRGSNRPWIRFNSDLDYQIGYVCSGIFGDNPRPVDGIGSCNSPVNNGKGRYGVKGFSFRYGDGVWIGRTKSLESRSGFEMVWDANGWVSTDKDSNGVQDIIDNNNWSGYSGSFSIRWETTGRNCTVPCFWVEMIRGQPKEKTIWTSGSSIAFCGVNSDTTGWSWPDGALLPFDIDK.

Residues 1–6 (MNPNQK) are Intravirion-facing. Residues 7-27 (IITIGSASIVLTTIGLLLQIT) traverse the membrane as a helical segment. The interval 11–33 (GSASIVLTTIGLLLQITSLCSIW) is involved in apical transport and lipid raft association. The Virion surface segment spans residues 28–470 (SLCSIWFSHY…GALLPFDIDK (443 aa)). The segment at 36-88 (HYNQVTQPHEQACSNNTTNYYNETFVNVTNVQNNYTTIIEPSAPNVVHYSSGR) is hypervariable stalk region. 5 N-linked (GlcNAc...) asparagine; by host glycosylation sites follow: Asn50, Asn51, Asn57, Asn62, and Asn69. The segment at 90–470 (LCPVKGWAPL…GALLPFDIDK (381 aa)) is head of neuraminidase. 8 cysteine pairs are disulfide-bonded: Cys91–Cys418, Cys123–Cys128, Cys183–Cys230, Cys232–Cys237, Cys278–Cys291, Cys280–Cys289, Cys317–Cys334, and Cys422–Cys447. Arg117 lines the substrate pocket. Asn145 carries an N-linked (GlcNAc...) asparagine; by host glycan. Asp150 functions as the Proton donor/acceptor in the catalytic mechanism. Arg151 serves as a coordination point for substrate. A glycan (N-linked (GlcNAc...) asparagine; by host) is linked at Asn269. 276 to 277 (EE) provides a ligand contact to substrate. Substrate is bound at residue Arg292. The Ca(2+) site is built by Asp293, Gly297, and Asp323. Arg369 is a binding site for substrate. Residue Asn399 is glycosylated (N-linked (GlcNAc...) asparagine; by host). Tyr403 acts as the Nucleophile in catalysis. Residue Asn417 is glycosylated (N-linked (GlcNAc...) asparagine; by host).

Belongs to the glycosyl hydrolase 34 family. Homotetramer. Ca(2+) is required as a cofactor. In terms of processing, N-glycosylated.

It localises to the virion membrane. Its subcellular location is the host apical cell membrane. The enzyme catalyses Hydrolysis of alpha-(2-&gt;3)-, alpha-(2-&gt;6)-, alpha-(2-&gt;8)- glycosidic linkages of terminal sialic acid residues in oligosaccharides, glycoproteins, glycolipids, colominic acid and synthetic substrates.. With respect to regulation, inhibited by the neuraminidase inhibitors zanamivir (Relenza) and oseltamivir (Tamiflu). These drugs interfere with the release of progeny virus from infected cells and are effective against all influenza strains. Resistance to neuraminidase inhibitors is quite rare. In terms of biological role, catalyzes the removal of terminal sialic acid residues from viral and cellular glycoconjugates. Cleaves off the terminal sialic acids on the glycosylated HA during virus budding to facilitate virus release. Additionally helps virus spread through the circulation by further removing sialic acids from the cell surface. These cleavages prevent self-aggregation and ensure the efficient spread of the progeny virus from cell to cell. Otherwise, infection would be limited to one round of replication. Described as a receptor-destroying enzyme because it cleaves a terminal sialic acid from the cellular receptors. May facilitate viral invasion of the upper airways by cleaving the sialic acid moieties on the mucin of the airway epithelial cells. Likely to plays a role in the budding process through its association with lipid rafts during intracellular transport. May additionally display a raft-association independent effect on budding. Plays a role in the determination of host range restriction on replication and virulence. Sialidase activity in late endosome/lysosome traffic seems to enhance virus replication. The sequence is that of Neuraminidase from Influenza A virus (strain A/Turkey/Ontario/6118/1968 H8N4).